The following is a 233-amino-acid chain: uncharacterized protein (233 aa).

Residues 196–212 are the nascent chain stimulates ribosomal stalling during translation by interfering with the conformation of the peptidyl transferase center (PTC), and the translating mRNA by adopting a difficult-to-decode structure at the ribosome decoding center; sequence FFYEDYLIFDCRAKRRK.

In terms of biological role, acts as an endogenous target of the ribosome quality control (RQC) pathway. During translation, the nascent chain has a propensity to stall ribosomes, thereby stimulating activation of the RQC pathway. This is an uncharacterized protein from Saccharomyces cerevisiae (strain ATCC 204508 / S288c) (Baker's yeast).